A 408-amino-acid polypeptide reads, in one-letter code: S-adenosylmethionine synthase (408 aa).

ATP is bound at residue His-15. Asp-17 lines the Mg(2+) pocket. Glu-43 provides a ligand contact to K(+). The L-methionine site is built by Glu-56 and Gln-100. The flexible loop stretch occupies residues 100–110 (QSPDIAQGVNE). Residues 171–173 (DGK), 248–249 (KF), Asp-257, 263–264 (RK), Ala-280, and Lys-284 contribute to the ATP site. Residue Asp-257 participates in L-methionine binding. Lys-288 lines the L-methionine pocket.

The protein belongs to the AdoMet synthase family. Homotetramer; dimer of dimers. Mg(2+) serves as cofactor. K(+) is required as a cofactor.

The protein resides in the cytoplasm. The catalysed reaction is L-methionine + ATP + H2O = S-adenosyl-L-methionine + phosphate + diphosphate. Its pathway is amino-acid biosynthesis; S-adenosyl-L-methionine biosynthesis; S-adenosyl-L-methionine from L-methionine: step 1/1. Its function is as follows. Catalyzes the formation of S-adenosylmethionine (AdoMet) from methionine and ATP. The overall synthetic reaction is composed of two sequential steps, AdoMet formation and the subsequent tripolyphosphate hydrolysis which occurs prior to release of AdoMet from the enzyme. The chain is S-adenosylmethionine synthase from Synechococcus sp. (strain CC9902).